A 21-amino-acid polypeptide reads, in one-letter code: Nigrocin-2 (21 aa).

Cys15 and Cys21 are disulfide-bonded.

Expressed by the skin dorsal glands.

Its subcellular location is the secreted. Its function is as follows. Thanks to its single linear amphipathic alpha-helix, may integrate into membrane phospholipids, leading to lysis of the membrane. Shows antibacterial activity against both Gram-positive and Gram-negative bacteria and against the fungus C.albicans. Has no hemolytic activity. The polypeptide is Nigrocin-2 (Pelophylax nigromaculatus (Black-spotted frog)).